The primary structure comprises 152 residues: Deoxyuridine 5'-triphosphate nucleotidohydrolase (152 aa).

Substrate is bound by residues 62–64 (RSG), Asn-75, and 79–81 (TVD).

The protein belongs to the dUTPase family. Mg(2+) is required as a cofactor.

It carries out the reaction dUTP + H2O = dUMP + diphosphate + H(+). It participates in pyrimidine metabolism; dUMP biosynthesis; dUMP from dCTP (dUTP route): step 2/2. This enzyme is involved in nucleotide metabolism: it produces dUMP, the immediate precursor of thymidine nucleotides and it decreases the intracellular concentration of dUTP so that uracil cannot be incorporated into DNA. This is Deoxyuridine 5'-triphosphate nucleotidohydrolase from Leifsonia xyli subsp. xyli (strain CTCB07).